The primary structure comprises 117 residues: Large ribosomal subunit protein uL18 (117 aa).

The protein belongs to the universal ribosomal protein uL18 family. As to quaternary structure, part of the 50S ribosomal subunit; part of the 5S rRNA/L5/L18/L25 subcomplex. Contacts the 5S and 23S rRNAs.

Functionally, this is one of the proteins that bind and probably mediate the attachment of the 5S RNA into the large ribosomal subunit, where it forms part of the central protuberance. In Leuconostoc citreum (strain KM20), this protein is Large ribosomal subunit protein uL18.